Here is a 238-residue protein sequence, read N- to C-terminus: 3-dehydroquinate dehydratase (238 aa).

Residues 35–37 and arginine 70 contribute to the 3-dehydroquinate site; that span reads ELR. The Proton donor/acceptor role is filled by histidine 133. The active-site Schiff-base intermediate with substrate is lysine 160. Residues arginine 202 and glutamine 225 each coordinate 3-dehydroquinate.

It belongs to the type-I 3-dehydroquinase family. In terms of assembly, homodimer.

It catalyses the reaction 3-dehydroquinate = 3-dehydroshikimate + H2O. It participates in metabolic intermediate biosynthesis; chorismate biosynthesis; chorismate from D-erythrose 4-phosphate and phosphoenolpyruvate: step 3/7. In terms of biological role, involved in the third step of the chorismate pathway, which leads to the biosynthesis of aromatic amino acids. Catalyzes the cis-dehydration of 3-dehydroquinate (DHQ) and introduces the first double bond of the aromatic ring to yield 3-dehydroshikimate. In Staphylococcus aureus (strain MSSA476), this protein is 3-dehydroquinate dehydratase.